The following is a 438-amino-acid chain: Aspartate--tRNA(Asp) ligase (438 aa).

Residue E170 participates in L-aspartate binding. Positions 192-195 (QLYK) are aspartate. Position 214 (R214) interacts with L-aspartate. ATP is bound by residues 214–216 (RAE), 222–224 (RHL), and E361. E361 and S364 together coordinate Mg(2+). L-aspartate-binding residues include S364 and R368. An ATP-binding site is contributed by 409 to 412 (GAER).

This sequence belongs to the class-II aminoacyl-tRNA synthetase family. Type 2 subfamily. As to quaternary structure, homodimer. Mg(2+) serves as cofactor.

It is found in the cytoplasm. The enzyme catalyses tRNA(Asp) + L-aspartate + ATP = L-aspartyl-tRNA(Asp) + AMP + diphosphate. Its function is as follows. Catalyzes the attachment of L-aspartate to tRNA(Asp) in a two-step reaction: L-aspartate is first activated by ATP to form Asp-AMP and then transferred to the acceptor end of tRNA(Asp). The protein is Aspartate--tRNA(Asp) ligase of Pyrococcus horikoshii (strain ATCC 700860 / DSM 12428 / JCM 9974 / NBRC 100139 / OT-3).